Here is a 407-residue protein sequence, read N- to C-terminus: Polygalacturonase (407 aa).

A signal peptide spans 1–26 (MAPHLNIVPSMFVLLLLFISASKVQP). PbH1 repeat units follow at residues 180–206 (CKNI…HMGK) and 207–228 (SEGV…SIGD). The N-linked (GlcNAc...) asparagine glycan is linked to Asn182. Asp221 (proton donor) is an active-site residue. Cys223 and Cys240 are oxidised to a cystine. Residue His244 is part of the active site. PbH1 repeat units lie at residues 260 to 281 (VEGI…RIKT) and 290 to 311 (VSEI…LIDQ). Residues Asn267, Asn272, Asn302, and Asn331 are each glycosylated (N-linked (GlcNAc...) asparagine). Cystine bridges form between Cys351-Cys357 and Cys379-Cys395. A PbH1 5 repeat occupies 357 to 384 (CQNVELADIDIQHNGAEPATSQCLNVKP).

The protein belongs to the glycosyl hydrolase 28 family. As to expression, pollen.

The protein resides in the secreted. It is found in the cell wall. The catalysed reaction is (1,4-alpha-D-galacturonosyl)n+m + H2O = (1,4-alpha-D-galacturonosyl)n + (1,4-alpha-D-galacturonosyl)m.. May function in the depolymerization of the pectin in its walls during pollen tube elongation, or in that of the pistil during pollination. The polypeptide is Polygalacturonase (G9) (Gossypium barbadense (Sea Island cotton)).